Reading from the N-terminus, the 23-residue chain is Prolamin alpha-3 (23 aa).

The protein is Prolamin alpha-3 of Dactylis glomerata (Orchard grass).